We begin with the raw amino-acid sequence, 105 residues long: Small ribosomal subunit protein uS10 (105 aa).

The protein belongs to the universal ribosomal protein uS10 family. As to quaternary structure, part of the 30S ribosomal subunit.

Functionally, involved in the binding of tRNA to the ribosomes. The chain is Small ribosomal subunit protein uS10 from Roseobacter denitrificans (strain ATCC 33942 / OCh 114) (Erythrobacter sp. (strain OCh 114)).